Reading from the N-terminus, the 185-residue chain is Elongation factor P (185 aa).

Belongs to the elongation factor P family.

Its subcellular location is the cytoplasm. It functions in the pathway protein biosynthesis; polypeptide chain elongation. Functionally, involved in peptide bond synthesis. Stimulates efficient translation and peptide-bond synthesis on native or reconstituted 70S ribosomes in vitro. Probably functions indirectly by altering the affinity of the ribosome for aminoacyl-tRNA, thus increasing their reactivity as acceptors for peptidyl transferase. This is Elongation factor P from Dictyoglomus thermophilum (strain ATCC 35947 / DSM 3960 / H-6-12).